The following is a 429-amino-acid chain: Serine--tRNA ligase (429 aa).

Residue 235-237 (TAE) coordinates L-serine. Residue 266-268 (RSE) participates in ATP binding. Glu289 contributes to the L-serine binding site. ATP is bound at residue 353–356 (EISS). Ser389 is an L-serine binding site.

Belongs to the class-II aminoacyl-tRNA synthetase family. Type-1 seryl-tRNA synthetase subfamily. As to quaternary structure, homodimer. The tRNA molecule binds across the dimer.

It localises to the cytoplasm. The catalysed reaction is tRNA(Ser) + L-serine + ATP = L-seryl-tRNA(Ser) + AMP + diphosphate + H(+). It carries out the reaction tRNA(Sec) + L-serine + ATP = L-seryl-tRNA(Sec) + AMP + diphosphate + H(+). It participates in aminoacyl-tRNA biosynthesis; selenocysteinyl-tRNA(Sec) biosynthesis; L-seryl-tRNA(Sec) from L-serine and tRNA(Sec): step 1/1. Catalyzes the attachment of serine to tRNA(Ser). Is also able to aminoacylate tRNA(Sec) with serine, to form the misacylated tRNA L-seryl-tRNA(Sec), which will be further converted into selenocysteinyl-tRNA(Sec). The protein is Serine--tRNA ligase of Histophilus somni (strain 2336) (Haemophilus somnus).